The following is a 591-amino-acid chain: A-type ATP synthase subunit A (591 aa).

Residue G233–T240 coordinates ATP.

Belongs to the ATPase alpha/beta chains family. Has multiple subunits with at least A(3), B(3), C, D, E, F, H, I and proteolipid K(x).

It localises to the cell membrane. It catalyses the reaction ATP + H2O + 4 H(+)(in) = ADP + phosphate + 5 H(+)(out). Its function is as follows. Component of the A-type ATP synthase that produces ATP from ADP in the presence of a proton gradient across the membrane. The A chain is the catalytic subunit. This is A-type ATP synthase subunit A from Metallosphaera sedula (strain ATCC 51363 / DSM 5348 / JCM 9185 / NBRC 15509 / TH2).